A 300-amino-acid chain; its full sequence is Quinolinate synthase (300 aa).

The iminosuccinate site is built by His23 and Ser40. Cys85 serves as a coordination point for [4Fe-4S] cluster. Iminosuccinate-binding positions include 111 to 113 (YIN) and Ser128. Cys171 is a binding site for [4Fe-4S] cluster. Residues 198-200 (HPE) and Thr215 each bind iminosuccinate. Cys258 is a [4Fe-4S] cluster binding site.

The protein belongs to the quinolinate synthase family. Type 2 subfamily. [4Fe-4S] cluster is required as a cofactor.

Its subcellular location is the cytoplasm. It carries out the reaction iminosuccinate + dihydroxyacetone phosphate = quinolinate + phosphate + 2 H2O + H(+). Its pathway is cofactor biosynthesis; NAD(+) biosynthesis; quinolinate from iminoaspartate: step 1/1. Catalyzes the condensation of iminoaspartate with dihydroxyacetone phosphate to form quinolinate. This is Quinolinate synthase from Clostridium novyi (strain NT).